A 507-amino-acid chain; its full sequence is Putative histone deacetylase 2 (507 aa).

The segment at 29–342 is histone deacetylase; it reads RNVAYYYHKD…WALETGVILG (314 aa). Histidine 162 is an active-site residue. The interval 444–507 is disordered; it reads EECFVEEDSK…RKDLNIPGIP (64 aa). Positions 482–501 are enriched in basic and acidic residues; that stretch reads SHSDVIEEAKYEDRDRRKDL.

This sequence belongs to the histone deacetylase family. HD type 1 subfamily. As to quaternary structure, may be a component of a histone deacetylase complex containing saeg-2, saeg-1 and hda-2.

It localises to the nucleus. The catalysed reaction is N(6)-acetyl-L-lysyl-[histone] + H2O = L-lysyl-[histone] + acetate. Functionally, probably responsible for the deacetylation of lysine residues on the N-terminal part of the core histones (H2A, H2B, H3 and H4). Histone deacetylation gives a tag for epigenetic repression and plays an important role in transcriptional regulation, cell cycle progression and developmental events. Histone deacetylases act via the formation of large multiprotein complexes. As a likely component of a histone deacetylase complex, together with saeg-1 and hda-2, functions downstream of the cAMP-dependent kinase egl-4 to regulate the expression of genes required for egg-laying and forgaging. The polypeptide is Putative histone deacetylase 2 (hda-2) (Caenorhabditis elegans).